A 143-amino-acid chain; its full sequence is uncharacterized protein (143 aa).

Cysteine 12 is a catalytic residue.

The protein belongs to the ArsC family.

This is an uncharacterized protein from Rhodospirillum rubrum.